A 182-amino-acid chain; its full sequence is Bifunctional protein PyrR (182 aa).

The PRPP-binding signature appears at 97–109; the sequence is VVLVDDVIFRGRT.

The protein belongs to the purine/pyrimidine phosphoribosyltransferase family. PyrR subfamily.

The enzyme catalyses UMP + diphosphate = 5-phospho-alpha-D-ribose 1-diphosphate + uracil. Its function is as follows. Regulates the transcription of the pyrimidine nucleotide (pyr) operon in response to exogenous pyrimidines. In terms of biological role, also displays a weak uracil phosphoribosyltransferase activity which is not physiologically significant. This is Bifunctional protein PyrR from Synechococcus sp. (strain JA-2-3B'a(2-13)) (Cyanobacteria bacterium Yellowstone B-Prime).